Here is a 285-residue protein sequence, read N- to C-terminus: MATKLQDGNTPCLAATPSEPRPTVLVFDSGVGGLSVYDEIRHLLPDLHYIYAFDNVAFPYGEKSEAFIVERVVAIVTAVQKRYPLALAVVACNTASTVSLPALREKFDFPVVGVVPAIKPAARLTANGIVGLLATRGTVKRSYTHELIARFANECQIEMLGSAEMVELAEAKLHGEDVSLDALKRILRPWLRMKEPPDTVVLGCTHFPLLQEELLQVLPEGTRLVDSGAAIARRTAWLLEHEAPDAKSADANIAFCMAMTPEAEQLLPVLQRYGFETLEKLAVLG.

Substrate-binding positions include 28–29 and 60–61; these read DS and YG. Catalysis depends on Cys-92, which acts as the Proton donor/acceptor. 93–94 provides a ligand contact to substrate; it reads NT. Cys-204 serves as the catalytic Proton donor/acceptor. 205 to 206 contacts substrate; the sequence is TH.

The protein belongs to the aspartate/glutamate racemases family.

The catalysed reaction is L-glutamate = D-glutamate. Its pathway is cell wall biogenesis; peptidoglycan biosynthesis. Its function is as follows. Provides the (R)-glutamate required for cell wall biosynthesis. The chain is Glutamate racemase from Escherichia coli O7:K1 (strain IAI39 / ExPEC).